The following is a 225-amino-acid chain: Protein-L-isoaspartate O-methyltransferase (225 aa).

Ser75 is a catalytic residue.

Belongs to the methyltransferase superfamily. L-isoaspartyl/D-aspartyl protein methyltransferase family.

It is found in the cytoplasm. The enzyme catalyses [protein]-L-isoaspartate + S-adenosyl-L-methionine = [protein]-L-isoaspartate alpha-methyl ester + S-adenosyl-L-homocysteine. In terms of biological role, catalyzes the methyl esterification of L-isoaspartyl residues in peptides and proteins that result from spontaneous decomposition of normal L-aspartyl and L-asparaginyl residues. It plays a role in the repair and/or degradation of damaged proteins. The protein is Protein-L-isoaspartate O-methyltransferase of Xylella fastidiosa (strain 9a5c).